Here is a 663-residue protein sequence, read N- to C-terminus: DNA topoisomerase 4 subunit B (663 aa).

ATP is bound by residues Tyr21, Asn61, Asp88, 130 to 136 (GLHGVGI), and Lys360. In terms of domain architecture, Toprim spans 440 to 554 (TELFIVEGDS…EGHLYLAKPP (115 aa)). Residues Glu446, Asp519, and Asp521 each contribute to the Mg(2+) site.

This sequence belongs to the type II topoisomerase family. ParE type 1 subfamily. As to quaternary structure, heterotetramer composed of ParC and ParE. The cofactor is Mg(2+). Mn(2+) serves as cofactor. Ca(2+) is required as a cofactor.

It catalyses the reaction ATP-dependent breakage, passage and rejoining of double-stranded DNA.. Its function is as follows. Topoisomerase IV is essential for chromosome segregation. It relaxes supercoiled DNA. Performs the decatenation events required during the replication of a circular DNA molecule. This chain is DNA topoisomerase 4 subunit B, found in Rickettsia typhi (strain ATCC VR-144 / Wilmington).